The primary structure comprises 255 residues: Fe(3+) dicitrate transport ATP-binding protein FecE (255 aa).

The 236-residue stretch at 3 to 238 (LRTENLTVSY…GLLRTVFSVE (236 aa)) folds into the ABC transporter domain. Position 35-42 (35-42 (GPNGCGKS)) interacts with ATP.

The protein belongs to the ABC transporter superfamily. The complex is composed of two ATP-binding proteins (FecE), two transmembrane proteins (FecC and FecD) and a solute-binding protein (FecB).

It is found in the cell inner membrane. It carries out the reaction iron(III) dicitrate(out) + ATP + H2O = iron(III) dicitrate(in) + ADP + phosphate + H(+). Part of the ABC transporter complex FecBCDE involved in citrate-dependent Fe(3+) uptake. Binds ATP. Probably responsible for energy coupling to the transport system. This Escherichia coli (strain K12) protein is Fe(3+) dicitrate transport ATP-binding protein FecE.